The sequence spans 1638 residues: Chromatin-remodeling ATPase INO80 (1638 aa).

Residues 41–93 are disordered; it reads SLRKPLSSDEETDDEHVVKREHDVQDSDDSSTVGVVRMKQSSKRKSRLLASKE. 2 positions are modified to phosphoserine: serine 47 and serine 48. Phosphothreonine is present on threonine 52. A compositionally biased stretch (basic and acidic residues) spans 55 to 65; that stretch reads EHVVKREHDVQ. A phosphoserine mark is found at serine 67 and serine 70. A coiled-coil region spans residues 136–161; that stretch reads VQQLLREHVREQRQRKNYYKKAANAQ. The disordered stretch occupies residues 201–259; the sequence is RLAEAQAGPKPPKQRRRGRKKRDNMGSPESGEVPPSELGKYTFGDTLPNNEDDDEDGGE. Positions 212–222 are enriched in basic residues; sequence PKQRRRGRKKR. 2 positions are modified to phosphoserine: serine 227 and serine 230. Positions 250 to 259 are enriched in acidic residues; sequence NEDDDEDGGE. One can recognise a DBINO domain in the interval 313-438; sequence IWQIMSKKES…AHFMSKKLGQ (126 aa). The interval 499–528 is disordered; it reads KEKEEEEQAQESVEDIKPEPRPEMKDLPQP. The span at 502 to 511 shows a compositional bias: acidic residues; it reads EEEEQAQESV. The span at 512 to 526 shows a compositional bias: basic and acidic residues; the sequence is EDIKPEPRPEMKDLP. Residues 547–718 form the Helicase ATP-binding domain; that stretch reads ANIYDQGISG…WALLHFIMPT (172 aa). Residue 560-567 coordinates ATP; that stretch reads DEMGLGKT. Positions 1160–1315 constitute a Helicase C-terminal domain; sequence VLDNLLTRLK…GGNFKPDTLK (156 aa). Disordered regions lie at residues 1335 to 1364 and 1463 to 1638; these read QEAK…DVNM and FLDD…VGPE. Over residues 1338-1350 the composition is skewed to polar residues; the sequence is KLQSSSPIPAATQ. A compositionally biased stretch (basic residues) spans 1473-1495; sequence MRRRHHPRGTRRGRPRGSTRRGG. Low complexity-rich tracts occupy residues 1505-1534 and 1618-1627; these read TPTQ…GTSS and SPATSRAPSP.

The protein belongs to the SNF2/RAD54 helicase family. In terms of assembly, component of the chromatin remodeling Ino80 complex.

It localises to the nucleus. The enzyme catalyses ATP + H2O = ADP + phosphate + H(+). Functionally, ATPase component of the chromatin remodeling INO80 complex which is involved in transcriptional regulation, DNA replication and DNA repair. Binds DNA. As part of the INO80 complex, remodels chromatin by shifting nucleosomes. The protein is Chromatin-remodeling ATPase INO80 of Drosophila melanogaster (Fruit fly).